Consider the following 674-residue polypeptide: Probable copper-transporting P-type ATPase B (674 aa).

The segment at 1–22 is disordered; the sequence is MNHSNQMHHDNHESHNHHSGHA. Basic and acidic residues predominate over residues 7-16; sequence MHHDNHESHN. The next 6 membrane-spanning stretches (helical) occupy residues 32–52, 57–77, 95–115, 127–147, 284–304, and 315–335; these read FFVS…MGVN, FTFP…FFYG, GMMT…LYAF, TMDF…GHWI, GYLF…WMLI, and LVTV…PLVT. D367 (4-aspartylphosphate intermediate) is an active-site residue. Mg(2+) is bound by residues D565 and D569. 2 helical membrane-spanning segments follow: residues 623–645 and 649–671; these read LWWG…AFIG and SPAI…AFTL.

It belongs to the cation transport ATPase (P-type) (TC 3.A.3) family. Type IB subfamily.

The protein resides in the cell membrane. The enzyme catalyses Cu(+)(in) + ATP + H2O = Cu(+)(out) + ADP + phosphate + H(+). Involved in copper transport. The sequence is that of Probable copper-transporting P-type ATPase B (copB) from Staphylococcus epidermidis (strain ATCC 35984 / DSM 28319 / BCRC 17069 / CCUG 31568 / BM 3577 / RP62A).